Here is a 416-residue protein sequence, read N- to C-terminus: Glutamyl-tRNA reductase (416 aa).

Residues 49–52 (TCNR), Ser105, 110–112 (EPQ), and Gln116 each bind substrate. The Nucleophile role is filled by Cys50. 185–190 (GAGETI) is an NADP(+) binding site.

It belongs to the glutamyl-tRNA reductase family. As to quaternary structure, homodimer.

It carries out the reaction (S)-4-amino-5-oxopentanoate + tRNA(Glu) + NADP(+) = L-glutamyl-tRNA(Glu) + NADPH + H(+). Its pathway is porphyrin-containing compound metabolism; protoporphyrin-IX biosynthesis; 5-aminolevulinate from L-glutamyl-tRNA(Glu): step 1/2. In terms of biological role, catalyzes the NADPH-dependent reduction of glutamyl-tRNA(Glu) to glutamate 1-semialdehyde (GSA). This is Glutamyl-tRNA reductase from Shewanella frigidimarina (strain NCIMB 400).